The chain runs to 503 residues: MTDKLSKYIITVFGASGDLSKKKTFPAIFGLFKQGEISKDECKIVGYARSKMNDEELRDRLKPFLLKQVSKESNGEKIVDEFLSNVTYVQGPYDTDEGYQKLGEAYKEIEKSLNKGSPVNKLHYLALPPSVFGSVCEKIKNNIYVNEDDAKTKIIVEKPFGHDLESSRQLQKELAPLFTEDELYRIDHYLGKEMVKNLLILRFGNILFNSAWNKENIQNIQITFKEPFGTEGRGGYFNDIGIIRDVMQNHLLQVLTLLTMERPVTFDSEAVRDEKVKVLKAIAPIDHDDIIIGQYGKSXDGSKPSYLDDETVPEGSKCITFAAMNFQIRNERWDGVPIVMKAGKALDVGKVEIRIQFKPVASGMFSQIPNNELVIRIQPDEAVYLKCNMKTPGLSTTTKITDLNLTYADRYEDFWIPQAYEALIRDALIGDHSNFVRDDELDVSWALFTPLLDYLEGENAPEPTIYAYGSRGPVELNXYMHXHNYKYMHGDIYQWPVTRPDSE.

NADP(+)-binding positions include 14–21 (GASGDLSK), arginine 49, and lysine 158. D-glucose 6-phosphate is bound by residues lysine 158, 188–192 (HYLGK), glutamate 226, and aspartate 245. The active-site Proton acceptor is histidine 250. Residue lysine 341 coordinates NADP(+). Lysine 344 is a D-glucose 6-phosphate binding site. Residues lysine 350, arginine 354, and arginine 376 each contribute to the NADP(+) site. Glutamine 378 provides a ligand contact to D-glucose 6-phosphate. Residues 384–386 (YLK), arginine 471, and tyrosine 487 each bind NADP(+).

The protein belongs to the glucose-6-phosphate dehydrogenase family.

It carries out the reaction D-glucose 6-phosphate + NADP(+) = 6-phospho-D-glucono-1,5-lactone + NADPH + H(+). The protein operates within carbohydrate degradation; pentose phosphate pathway; D-ribulose 5-phosphate from D-glucose 6-phosphate (oxidative stage): step 1/3. Catalyzes the rate-limiting step of the oxidative pentose-phosphate pathway, which represents a route for the dissimilation of carbohydrates besides glycolysis. The main function of this enzyme is to provide reducing power (NADPH) and pentose phosphates for fatty acid and nucleic acid synthesis. The G6PDH activity is required to cope with hydrogen peroxide and potassium bisulfite stresses and plays a role in adaptation to conditions used in wine fermentations. This chain is Glucose-6-phosphate 1-dehydrogenase, found in Hanseniaspora uvarum (Yeast).